We begin with the raw amino-acid sequence, 275 residues long: NifU-like protein 5, mitochondrial (275 aa).

A mitochondrion-targeting transit peptide spans 1-61 (MKGLTRLLNS…TNASRNCSRS (61 aa)).

Belongs to the NifU family.

The protein localises to the mitochondrion. Molecular scaffold for [Fe-S] cluster assembly of mitochondrial iron-sulfur proteins. The polypeptide is NifU-like protein 5, mitochondrial (NIFU5) (Arabidopsis thaliana (Mouse-ear cress)).